Consider the following 290-residue polypeptide: Ribosomal RNA small subunit methyltransferase A (290 aa).

Residues asparagine 27, leucine 29, glycine 54, glutamate 75, aspartate 100, and asparagine 125 each contribute to the S-adenosyl-L-methionine site.

Belongs to the class I-like SAM-binding methyltransferase superfamily. rRNA adenine N(6)-methyltransferase family. RsmA subfamily.

The protein localises to the cytoplasm. The catalysed reaction is adenosine(1518)/adenosine(1519) in 16S rRNA + 4 S-adenosyl-L-methionine = N(6)-dimethyladenosine(1518)/N(6)-dimethyladenosine(1519) in 16S rRNA + 4 S-adenosyl-L-homocysteine + 4 H(+). Its function is as follows. Specifically dimethylates two adjacent adenosines (A1518 and A1519) in the loop of a conserved hairpin near the 3'-end of 16S rRNA in the 30S particle. May play a critical role in biogenesis of 30S subunits. This Streptococcus uberis (strain ATCC BAA-854 / 0140J) protein is Ribosomal RNA small subunit methyltransferase A.